The primary structure comprises 603 residues: Nuclear receptor subfamily 2 group C member 1 (603 aa).

The interval Met1–Met178 is required for interaction with KAT2B. The segment at residues Phe110–Cys185 is a DNA-binding region (nuclear receptor). 2 consecutive NR C4-type zinc fingers follow at residues Cys113–Cys133 and Cys149–Cys173. Phosphoserine is present on residues Ser197 and Ser215. Position 220 is a phosphothreonine (Thr220). Thr222 carries the phosphothreonine; by MAPK1 modification. Residue Lys250 forms a Glycyl lysine isopeptide (Lys-Gly) (interchain with G-Cter in SUMO2) linkage. Residues Gly348 to Glu590 enclose the NR LBD domain. Ser581 is modified (phosphoserine; by PKC). Residues Pro584–Ile603 are required for interaction with NRIP1. A Glycyl lysine isopeptide (Lys-Gly) (interchain with G-Cter in SUMO2) cross-link involves residue Lys588.

This sequence belongs to the nuclear hormone receptor family. NR2 subfamily. In terms of assembly, homodimer. Heterodimer; binds DNA as a heterodimer with NR2C2 required for chromatin remodeling and for binding to promoter regions such as globin DR1 repeats. Interacts with NRIP1 (via its LXXLL motifs); the interaction provides corepressor activity. Interacts with HDAC3 (via the DNA-binding domain). Interacts with HDAC4 (via the DNA-binding domain). Interacts with PIAS1; the interaction is required for sumoylation of NR2C1. Interacts with UBE2I; the interaction is required for sumoylation of NR2C1. Interacts with KAT2B; the interaction acts as a corepressor of gene expression. Interacts with ESR1; the interaction prevents homodimerization of ESR1 and suppresses its transcriptional activity and cell growth. Sumoylation requires both PIAS1 and UBE2I. Sumoylation appears to dissociate NR2C1 from the PML nuclear bodies. Enhances the interaction with NRIP1 but inhibits interaction with KAT2B. In proliferating cells, stimulation by all-trans retinoic acid, activation of MAPK1-mediated phosphorylation and recruitment to PML bodies with subsequent sumoylation, suppresses OCT4 expression. In terms of processing, phosphorylated on several serine and threonine residues. Phosphorylation on Thr-222, stimulated by all-trans retinoic acid (atRA) mediates PML location and sumoylation in proliferating cells which then modulates its association with effector molecules, KAT2B and NRIP1. Phosphorylation on Ser-581 by PKC is important for protein stability and function as activator of RARB.

It is found in the nucleus. Its subcellular location is the PML body. Functionally, orphan nuclear receptor. Binds the IR7 element in the promoter of its own gene in an autoregulatory negative feedback mechanism. Primarily repressor of a broad range of genes. Binds to hormone response elements (HREs) consisting of two 5'-AGGTCA-3' half site direct repeat consensus sequences. Together with NR2C2, forms the core of the DRED (direct repeat erythroid-definitive) complex that represses embryonic and fetal globin transcription. Also activator of OCT4 gene expression. May be involved in stem cell proliferation and differentiation. Mediator of retinoic acid-regulated preadipocyte proliferation. This is Nuclear receptor subfamily 2 group C member 1 (NR2C1) from Homo sapiens (Human).